The chain runs to 293 residues: Heterogeneous nuclear ribonucleoprotein D-like-A (293 aa).

The interval 1–21 (MAGFGAAPDFNEGSKINASKN) is disordered. RRM domains are found at residues 26 to 108 (GKMF…KGKE) and 111 to 188 (KKVF…AAQP). 2 disordered regions span residues 193–224 (RQQQQKQQRGGRGAVTGRGGTRGRGRGQGWNQ) and 274–293 (QSTYGKARGGGNHQNNYQPY). Over residues 202–222 (GGRGAVTGRGGTRGRGRGQGW) the composition is skewed to gly residues.

It localises to the nucleus. The protein resides in the cytoplasm. Its function is as follows. Acts as a transcriptional regulator. Binds DNA and RNA. The protein is Heterogeneous nuclear ribonucleoprotein D-like-A (hnrnpdl-a) of Xenopus laevis (African clawed frog).